The primary structure comprises 486 residues: UDP-N-acetylmuramoyl-L-alanyl-D-glutamate--2,6-diaminopimelate ligase (486 aa).

A UDP-N-acetyl-alpha-D-muramoyl-L-alanyl-D-glutamate-binding site is contributed by Ser-34. An ATP-binding site is contributed by 112–118 (GTAGKTS). UDP-N-acetyl-alpha-D-muramoyl-L-alanyl-D-glutamate is bound by residues 154–155 (TT), Ser-181, Gln-187, and Arg-189. Lys-221 carries the post-translational modification N6-carboxylysine. Meso-2,6-diaminopimelate is bound by residues Arg-385, 409 to 412 (DNPR), Gly-457, and Glu-461. The Meso-diaminopimelate recognition motif signature appears at 409–412 (DNPR).

It belongs to the MurCDEF family. MurE subfamily. It depends on Mg(2+) as a cofactor. In terms of processing, carboxylation is probably crucial for Mg(2+) binding and, consequently, for the gamma-phosphate positioning of ATP.

Its subcellular location is the cytoplasm. It carries out the reaction UDP-N-acetyl-alpha-D-muramoyl-L-alanyl-D-glutamate + meso-2,6-diaminopimelate + ATP = UDP-N-acetyl-alpha-D-muramoyl-L-alanyl-gamma-D-glutamyl-meso-2,6-diaminopimelate + ADP + phosphate + H(+). The protein operates within cell wall biogenesis; peptidoglycan biosynthesis. Its function is as follows. Catalyzes the addition of meso-diaminopimelic acid to the nucleotide precursor UDP-N-acetylmuramoyl-L-alanyl-D-glutamate (UMAG) in the biosynthesis of bacterial cell-wall peptidoglycan. In Rhizobium meliloti (strain 1021) (Ensifer meliloti), this protein is UDP-N-acetylmuramoyl-L-alanyl-D-glutamate--2,6-diaminopimelate ligase.